A 217-amino-acid polypeptide reads, in one-letter code: MARKGILGTKLGMTQVFDESNRVVPVTVVKAGPNVVTRIRTPERDGYSAVQLAYGEISPRKVNKPLTGQYTAAGVNPRRYLAELRLDDSDAATEYQVGQELTAEIFADGSYVDVTGTSKGKGFAGTMKRHGFRGQGASHGAQAVHRRPGSIGGCATPARVFKGTRMAGRMGNDRVTVLNLLVHKVDAENGVLLIKGAVPGRTGGLVMVRSAIKRGEK.

It belongs to the universal ribosomal protein uL3 family. Part of the 50S ribosomal subunit. Forms a cluster with proteins L14 and L19.

One of the primary rRNA binding proteins, it binds directly near the 3'-end of the 23S rRNA, where it nucleates assembly of the 50S subunit. The chain is Large ribosomal subunit protein uL3 from Mycobacterium bovis (strain ATCC BAA-935 / AF2122/97).